Consider the following 81-residue polypeptide: MSESNNYSAFFVLLFIFTILFLIVVAFLLLGILNGAFATYAHHPLSPSLLSSLDFVLYLFAFGILAVLFLLIAFAIQRKGS.

Helical transmembrane passes span 10–30 and 56–76; these read FFVLLFIFTILFLIVVAFLLL and VLYLFAFGILAVLFLLIAFAI.

It is found in the host membrane. This is an uncharacterized protein from Acidianus two-tailed virus (ATV).